An 804-amino-acid polypeptide reads, in one-letter code: Ribonucleoside-diphosphate reductase large subunit-like protein (804 aa).

This sequence belongs to the ribonucleoside diphosphate reductase large chain family. As to quaternary structure, the genome of human herpesvirus-6 does not code for a ribonucleotide reductase small subunit.

The protein localises to the virion. It localises to the host cytoplasm. Its function is as follows. Does not possess a ribonucleotide reductase activity. Betaherpesviruses probably use another strategy to expand the dNTP pool in a quiescent host cell. The protein is Ribonucleoside-diphosphate reductase large subunit-like protein of Human herpesvirus 6B (strain Z29) (HHV-6 variant B).